Reading from the N-terminus, the 588-residue chain is DNA mismatch repair protein MutL (588 aa).

The protein belongs to the DNA mismatch repair MutL/HexB family.

Functionally, this protein is involved in the repair of mismatches in DNA. It is required for dam-dependent methyl-directed DNA mismatch repair. May act as a 'molecular matchmaker', a protein that promotes the formation of a stable complex between two or more DNA-binding proteins in an ATP-dependent manner without itself being part of a final effector complex. This Fervidobacterium nodosum (strain ATCC 35602 / DSM 5306 / Rt17-B1) protein is DNA mismatch repair protein MutL.